The following is a 79-amino-acid chain: DNA-directed RNA polymerase subunit omega (79 aa).

The protein belongs to the RNA polymerase subunit omega family. As to quaternary structure, the RNAP catalytic core consists of 2 alpha, 1 beta, 1 beta' and 1 omega subunit. When a sigma factor is associated with the core the holoenzyme is formed, which can initiate transcription.

The catalysed reaction is RNA(n) + a ribonucleoside 5'-triphosphate = RNA(n+1) + diphosphate. Its function is as follows. Promotes RNA polymerase assembly. Latches the N- and C-terminal regions of the beta' subunit thereby facilitating its interaction with the beta and alpha subunits. In Bdellovibrio bacteriovorus (strain ATCC 15356 / DSM 50701 / NCIMB 9529 / HD100), this protein is DNA-directed RNA polymerase subunit omega.